A 282-amino-acid chain; its full sequence is Putative hydrolase BamMC406_5393 (282 aa).

Mg(2+) is bound by residues Glu124, Glu126, and Asp155.

It belongs to the FAH family. It depends on Mg(2+) as a cofactor.

This Burkholderia ambifaria (strain MC40-6) protein is Putative hydrolase BamMC406_5393.